A 257-amino-acid polypeptide reads, in one-letter code: 3-alpha-hydroxysteroid dehydrogenase/carbonyl reductase (257 aa).

NAD(+) is bound by residues 8–13, Asp32, 41–42, and Gly71; these read GCATGI and DL. Ser114 contacts substrate. NAD(+) contacts are provided by Tyr155 and Lys159. The active-site Proton acceptor is Tyr155.

The protein belongs to the short-chain dehydrogenases/reductases (SDR) family. Homodimer.

It localises to the cytoplasm. The enzyme catalyses a 3alpha-hydroxysteroid + NADP(+) = a 3-oxosteroid + NADPH + H(+). It catalyses the reaction a 3alpha-hydroxysteroid + NAD(+) = a 3-oxosteroid + NADH + H(+). Its function is as follows. Catalyzes the reversible interconversion of hydroxy and oxo groups at position 3 of the steroid nucleus. Along with the 3 alpha-hydroxysteroid dehydrogenase and 3-oxo-reductase activities towards a variety of cis or trans fused A/B ring steroids, it also reduces several xenobiotic carbonyl compounds, including a metyrapone-based class of insecticides, to the respective alcohol metabolites. No detectable activity on testosterone, progesterone or 3-oxo-desogestrel. The chain is 3-alpha-hydroxysteroid dehydrogenase/carbonyl reductase (hsdA) from Comamonas testosteroni (Pseudomonas testosteroni).